Reading from the N-terminus, the 455-residue chain is F-box/FBD/LRR-repeat protein At3g51530 (455 aa).

The tract at residues Met1 to Phe26 is disordered. In terms of domain architecture, F-box spans Glu29–Glu75. LRR repeat units follow at residues Ile80–Val106, Glu155–Ser182, Val183–Arg208, Thr227–Ser257, Ile277–Leu302, and Thr325–Asp351. The FBD domain occupies Lys370–Thr417.

This chain is F-box/FBD/LRR-repeat protein At3g51530, found in Arabidopsis thaliana (Mouse-ear cress).